A 531-amino-acid chain; its full sequence is Cytochrome P450 monooxygenase acuC (531 aa).

The chain crosses the membrane as a helical span at residues 3–23 (PIVWLLGGAIALLVVVIRAAW). C447 provides a ligand contact to heme.

Belongs to the cytochrome P450 family. Heme is required as a cofactor.

The protein localises to the endoplasmic reticulum membrane. It catalyses the reaction 3-methylphenol + reduced [NADPH--hemoprotein reductase] + O2 = 3-hydroxybenzyl alcohol + oxidized [NADPH--hemoprotein reductase] + H2O + H(+). Its pathway is secondary metabolite biosynthesis. Its function is as follows. Cytochrome P450 monooxygenase; part of the gene cluster that mediates the biosynthesis of aculins. The pathway begins with the synthesis of 6-methylsalicylic acid by the polyketide synthase (PKS) acuA via condensation of acetate and malonate units. The 6-methylsalicylic acid decarboxylase acuB then catalyzes the decarboxylation of 6-methylsalicylic acid to yield m-cresol (also known as 3-methylphenol). These first reactions occur in the cytosol. The intermediate m-cresol is then transported into the endoplasmic reticulum where the cytochrome P450 monooxygenase acuC converts it to m-hydroxybenzyl alcohol, which is further converted to gentisyl alcohol by the cytochrome P450 monooxygenase acuD. Gentisyl alcohol is further oxidized by the oxidoreductase acuE that probably catalyzes hydroxylation of the aromatic ring. The aromatic system might then be opened by oxidation through a Baeyer-Villiger type of oxidation, which could be catalyzed by acuF, with the carboxylic acid at C-1 subsequently reduced to an aldehyde by acuG. Subsequently, a hemiacetal is formed, before the dehydrogenase acuH would reduce the double bond between C-4 and C-6. Finally, keto-enol tautomerism results in formation of aculinic acid, which exists as two diastereomers (both R/S configurations at C-1) by non-enzymatic hemiacetal formation. The carboxypeptidase acuI could be involved in the linking of aculinic acid to an aculene A moiety produced by the aculene biosynthesis cluster and which leads to the production of aculin A. AcuI may also be involved in the attachment of proline to aculinic acid to form epi-aculins A and B. This chain is Cytochrome P450 monooxygenase acuC, found in Aspergillus aculeatus (strain ATCC 16872 / CBS 172.66 / WB 5094).